The following is a 736-amino-acid chain: MNSQLSLSTIQSLVDGSVANPGSLLGRHPVNYRGREATSVRVLEPNAESVWLIDSASGLRRPMRRLHPGGFFEAICDEPITKPSTSRLQMIDKTGKEIKTTSPYTVPSIFSDLDRYLIGEGRHNQLYERLGAQLREVDGVKGVNFAVWAPNARSVQVVGDFNGWDGRGHVAQPVESTGIWELFLPGATVGQKYKFRIQTQHGHWMDKCDPMAFAAELPPLTANIITDINTYSWNDSDWLQQRAEMDPMHTPMNVYEVHLGSWQKGPGRTHGWLDYRDLAKRLVDYCHRMNFTHVELMPISEHPFTGSWGYQSVGYYAPTSRHGSPEDFMFFVDHMHQNGIGVLIDWVPAHFPKDDHGLRQFDGSALYEHADPRQGEHPDWGTMIFNFGRNEVKNFLIANALFWLDKYHIDGLRVDAVASMLYLDYSREDGEWIPNRYGGRENLESIDFLRDFNIAVHENHPGVITAAEESTAWPGVSRPTYDGGLGFTYKWNMGWMNDTLSYMRNEPIHRKFHQNELTFSLIYAFTENFTLPLSHDEVVHGKGSLISQMPGDMWQKFANLRLLYSYMWTHPGKKLLFMGGEIAQWTEWNADDGPQWELLDFDTHRGVQQLVADLNKVVIENPALHWHDFTGDGFEWIDAHNAEDSVLVYLRKGAEGDPPILVCNNFTPVPRDNYRVGVPAQGFWKEIFNSDGEAYGGSNLGNYPGCQTTGIEHHARPDSIEVTLPPLGTTILRLES.

Catalysis depends on aspartate 415, which acts as the Nucleophile. Glutamate 468 functions as the Proton donor in the catalytic mechanism.

The protein belongs to the glycosyl hydrolase 13 family. GlgB subfamily. As to quaternary structure, monomer.

It catalyses the reaction Transfers a segment of a (1-&gt;4)-alpha-D-glucan chain to a primary hydroxy group in a similar glucan chain.. Its pathway is glycan biosynthesis; glycogen biosynthesis. In terms of biological role, catalyzes the formation of the alpha-1,6-glucosidic linkages in glycogen by scission of a 1,4-alpha-linked oligosaccharide from growing alpha-1,4-glucan chains and the subsequent attachment of the oligosaccharide to the alpha-1,6 position. The protein is 1,4-alpha-glucan branching enzyme GlgB of Rhodopirellula baltica (strain DSM 10527 / NCIMB 13988 / SH1).